A 115-amino-acid polypeptide reads, in one-letter code: Macrophage migration inhibitory factor homolog (115 aa).

P2 serves as the catalytic Proton acceptor; via imino nitrogen. Substrate is bound by residues K33 and I65.

It belongs to the MIF family.

It is found in the secreted. The enzyme catalyses L-dopachrome = 5,6-dihydroxyindole-2-carboxylate. It carries out the reaction 3-phenylpyruvate = enol-phenylpyruvate. In terms of biological role, tautomerization of the methyl ester of L-dopachrome. Inhibits migration of human peripheral blood mononuclear cells. The sequence is that of Macrophage migration inhibitory factor homolog from Brugia malayi (Filarial nematode worm).